A 654-amino-acid polypeptide reads, in one-letter code: RING finger protein 112 (654 aa).

The RING-type zinc finger occupies 80-121 (CSICLERLREPISLDCGHDFCIRCFSTHRIPGCELPCCPECR). Residues 154–654 (AVRAERLLLV…GDREPLLQEE (501 aa)) form an interaction with ZBTB16 region. The region spanning 189-420 (DTPVCLLAVL…YILDVLSTAP (232 aa)) is the GB1/RHD3-type G domain. Residue 340–341 (RD) coordinates GTP. Transmembrane regions (helical) follow at residues 570–590 (LAAVGGAVGAGLMGLAGGVVG) and 603–623 (GMVAAGAAVGATGAAVVGGGV).

Belongs to the TRAFAC class dynamin-like GTPase superfamily. GB1/RHD3 GTPase family. GB1 subfamily. In terms of assembly, self-associates. Interacts with SP1 in an oxidative stress-regulated manner. Interacts with SIGMAR1 in an oxidative stress-regulated manner. Interacts with ZBTB16 (via C2H2-type zinc finger domains 1 and 2). Auto-ubiquitinated. Expressed in most of the brain areas, including cortex, striatum, hippocampus, thalamus, and cerebellum (at protein level). Expressed in lateral amygdaloid nucleus, and ventromedial hypothalamus. Also expressed strongly in the marginal zone of brain vesicles, optic stalk, and cartilage primordium.

It is found in the membrane. The protein resides in the cytoplasm. The protein localises to the nucleus. Its subcellular location is the nuclear body. It localises to the nucleoplasm. It is found in the endosome. The protein resides in the cytoplasmic vesicle. The protein localises to the secretory vesicle. Its subcellular location is the synaptic vesicle. It localises to the postsynaptic density. It is found in the perikaryon. The protein resides in the cell projection. The protein localises to the neuron projection. It catalyses the reaction S-ubiquitinyl-[E2 ubiquitin-conjugating enzyme]-L-cysteine + [acceptor protein]-L-lysine = [E2 ubiquitin-conjugating enzyme]-L-cysteine + N(6)-ubiquitinyl-[acceptor protein]-L-lysine.. It participates in protein modification; protein ubiquitination. E3 ubiquitin-protein ligase that plays an important role in neuronal differentiation, including neurogenesis and gliogenesis, during brain development. During embryonic development initiates neuronal differentiation by inducing cell cycle arrest at the G0/G1 phase through up-regulation of cell-cycle regulatory proteins. Plays a role not only in the fetal period during the development of the nervous system, but also in the adult brain, where it is involved in the maintenance of neural functions and protection of the nervous tissue cells from oxidative stress-induced damage. Exhibits GTPase and E3 ubiquitin-protein ligase activities. Regulates dendritic spine density and synaptic neurotransmission; its ability to hydrolyze GTP is involved in the maintenance of dendritic spine density. In Mus musculus (Mouse), this protein is RING finger protein 112 (Rnf112).